Here is a 154-residue protein sequence, read N- to C-terminus: Anaerobic ribonucleoside-triphosphate reductase-activating protein (154 aa).

[4Fe-4S] cluster contacts are provided by cysteine 26, cysteine 30, and cysteine 33. S-adenosyl-L-methionine contacts are provided by residues 32-34 and glycine 74; that span reads GCY.

The protein belongs to the organic radical-activating enzymes family. Forms a tetramer composed of two NrdD and two NrdG subunits. [4Fe-4S] cluster is required as a cofactor.

It is found in the cytoplasm. It catalyses the reaction glycyl-[protein] + reduced [flavodoxin] + S-adenosyl-L-methionine = glycin-2-yl radical-[protein] + semiquinone [flavodoxin] + 5'-deoxyadenosine + L-methionine + H(+). In terms of biological role, activation of anaerobic ribonucleoside-triphosphate reductase under anaerobic conditions by generation of an organic free radical, using S-adenosylmethionine and reduced flavodoxin as cosubstrates to produce 5'-deoxy-adenosine. The chain is Anaerobic ribonucleoside-triphosphate reductase-activating protein (nrdG) from Salmonella typhimurium (strain LT2 / SGSC1412 / ATCC 700720).